An 884-amino-acid chain; its full sequence is Microsomal triglyceride transfer protein large subunit (884 aa).

The N-terminal stretch at 1-21 (MMPVAGLLLCVTAVLCTSALG) is a signal peptide. A Vitellogenin domain is found at 26–660 (LDNGKLYRYS…QSNNALLHGL (635 aa)). Cysteine 172 and cysteine 192 are oxidised to a cystine. N-linked (GlcNAc...) asparagine glycosylation is present at asparagine 348. Cysteine 438 and cysteine 443 are oxidised to a cystine. N-linked (GlcNAc...) asparagine glycosylation is present at asparagine 787.

As to quaternary structure, heterodimer; heterodimerizes with the protein disulfide isomerase. As to expression, highest expression in the proximal part of the anterior intestine. Lower expression in the distal part of the anterior intestine, in the posterior portion of the intestinal tube and liver. Very low expression levels in heart, brain, ovary, testis and kidney.

Its subcellular location is the endoplasmic reticulum. It localises to the golgi apparatus. It catalyses the reaction a 1,2-diacyl-sn-glycero-3-phosphocholine(in) = a 1,2-diacyl-sn-glycero-3-phosphocholine(out). The catalysed reaction is a 1,2-diacyl-sn-glycero-3-phosphoethanolamine(in) = a 1,2-diacyl-sn-glycero-3-phosphoethanolamine(out). The enzyme catalyses a cholesterol ester(in) = a cholesterol ester(out). It carries out the reaction a triacyl-sn-glycerol(in) = a triacyl-sn-glycerol(out). Its activity is regulated as follows. Inhibited by naringenin. Its function is as follows. Catalyzes the transport of triglyceride between phospholipid surfaces. Catalyzes the transport of cholesteryl ester, and phospholipid between phospholipid surfaces. Required for the assembly and secretion of plasma lipoproteins that contain apolipoprotein B. Required for yolk lipid utilization and absorption of dietary lipids in larvae. The chain is Microsomal triglyceride transfer protein large subunit from Danio rerio (Zebrafish).